A 365-amino-acid chain; its full sequence is Geissoschizine synthase (365 aa).

A Zn(2+)-binding site is contributed by C51. N52 contacts NADP(+). Positions 73, 74, 104, 107, 110, 118, and 169 each coordinate Zn(2+). 13 residues coordinate NADP(+): L195, G197, L198, S217, T218, S219, K222, R262, V281, A283, S305, T307, and R352.

This sequence belongs to the zinc-containing alcohol dehydrogenase family. Class-III subfamily. As to quaternary structure, homodimer. The cofactor is Zn(2+). As to expression, mainly expressed in roots and, to a lower level, in leaves.

It carries out the reaction (19E)-geissoschizine + NADP(+) = 4,21-dehydrogeissoschizine + NADPH. Its pathway is alkaloid biosynthesis; ajmaline biosynthesis. Alcohol dehydrogenase involved in the biosynthesis of ajmaline-type monoterpenoid indole alkaloids (MIAs) natural products, important plant-derived pharmaceuticals used in the therapy of heart disorders. Catalyzes iminium reduction on 4,21-dehydrogeissoschizine to produce 19E-geissoschizine, precursor of vomilenine, an intermediate chemical in the biosynthesis of ajmaline. This is Geissoschizine synthase from Rauvolfia serpentina (Serpentine wood).